A 109-amino-acid chain; its full sequence is Putative antitoxin HigA3 (109 aa).

In terms of domain architecture, HTH cro/C1-type spans 41–97 (LAEIRKALGHARQADVAALMGVSQARVSKLESGDLSHTELGTLQAYVAALGGHLRIV). The segment at residues 53-72 (QADVAALMGVSQARVSKLES) is a DNA-binding region (H-T-H motif).

Putative antitoxin component of a type II toxin-antitoxin (TA) system. Its cognate toxin would be HigB3. The protein is Putative antitoxin HigA3 of Mycobacterium tuberculosis (strain ATCC 25618 / H37Rv).